Here is a 97-residue protein sequence, read N- to C-terminus: Aspartyl/glutamyl-tRNA(Asn/Gln) amidotransferase subunit C (97 aa).

This sequence belongs to the GatC family. Heterotrimer of A, B and C subunits.

The enzyme catalyses L-glutamyl-tRNA(Gln) + L-glutamine + ATP + H2O = L-glutaminyl-tRNA(Gln) + L-glutamate + ADP + phosphate + H(+). It carries out the reaction L-aspartyl-tRNA(Asn) + L-glutamine + ATP + H2O = L-asparaginyl-tRNA(Asn) + L-glutamate + ADP + phosphate + 2 H(+). Its function is as follows. Allows the formation of correctly charged Asn-tRNA(Asn) or Gln-tRNA(Gln) through the transamidation of misacylated Asp-tRNA(Asn) or Glu-tRNA(Gln) in organisms which lack either or both of asparaginyl-tRNA or glutaminyl-tRNA synthetases. The reaction takes place in the presence of glutamine and ATP through an activated phospho-Asp-tRNA(Asn) or phospho-Glu-tRNA(Gln). The polypeptide is Aspartyl/glutamyl-tRNA(Asn/Gln) amidotransferase subunit C (Synechococcus sp. (strain CC9902)).